The following is a 728-amino-acid chain: Plakophilin-1 (728 aa).

Residues 1–235 (MNHSPLKTAL…SFGHSRASSK (235 aa)) are required for binding to single stranded DNA. Positions 1-287 (MNHSPLKTAL…ESAKQQVYQL (287 aa)) are required for interaction with EIF4A1. S4 carries the post-translational modification Phosphoserine; by RIPK4. The disordered stretch occupies residues 48 to 69 (TVKRQKSKSSQSSTLSHSNRGS). Phosphorylation in this region is required for cytoplasmic localization and protein stabilization regions lie at residues 54–69 (SKSSQSSTLSHSNRGS) and 117–192 (RFSS…STCS). The residue at position 119 (S119) is a Phosphoserine. At S120 the chain carries Phosphoserine; by RIPK4. The residue at position 122 (S122) is a Phosphoserine. S143 carries the post-translational modification Phosphoserine; by RIPK4. Residues 161-270 (YCDPRGTLRK…KYQAIGAYYI (110 aa)) are required for WNT-mediated nuclear localization. ARM repeat units follow at residues 244–275 (SGLTIPKAVQYLCSQDEKYQAIGAYYIQHTCF), 276–317 (QDES…NLVF), 318–360 (RSTP…NLSS), 361–412 (TDEL…GCLR), 413–443 (NLSSADAGRQTMRNYSGLIDSLMAYVQNCVA), 505–536 (NYDCPLPEEETNPKGSSWLYHSDAIRTYLNLM), 537–583 (GKSK…IARL), 584–629 (LQSG…SHTG), and 630–694 (NTSN…DMWA).

Belongs to the beta-catenin family. In terms of assembly, part of a complex that contains DSG3, PKP1, YAP1 and YWHAG; the complex is required for localization of DSG3 and YAP1 to the cell membrane in keratinocytes. Interacts (via N-terminus) with KRT5/CK5, KRT8/CK8 (via rod domain), KRT15/CK15 and KRT18/CK18 (via rod domain) as part of intermediate filaments. Interacts with VIM (via rod domain). Interacts with DSP. Interacts with DES. Interacts with FXR1; the interaction may facilitate the binding of PKP1 to PKP2, PKP3 and DSP mRNA. Interacts (via N-terminus) with EIF4A1; the interaction promotes EIF4A1 recruitment to the cap-dependent translation complex and EIF4A1 ATPase activity. Interacts with TJP1/ZO-1; the interaction facilitates TJP1/ZO-1 localization to the plasma membrane. Interacts (when phosphorylated) with YWHAG; the interaction results in translocation of PKP1 to the cytoplasm and loss of intercellular adhesion in keratinocytes. Phosphorylated by AKT2; required for interaction with YWHAG and subsequent localization away from desmosomes to the cytoplasm. Phosphorylation of Ser-119 by AKT2 promotes PKP1-driven cap-dependent mRNA translation and decreases intercellular adhesion, phosphorylation is promoted by insulin. Phosphorylation by RIPK4 at the N-terminus is required for its role in differentiation of keratinocytes and DSG1 localization at cell junctions. As to expression, expressed in undifferentiated keratinocytes of the epidermis at birth, expression increases as differentiation proceeds (at protein level). Expressed in the cervical loop during early tooth differentiation, expression is then present between ameloblasts, at ameloblast-ameloblast junctions and in the stratum intermedium during pre-secretory and secretory stages of tooth development (at protein level).

It is found in the nucleus. It localises to the cytoplasm. The protein localises to the perinuclear region. The protein resides in the cell junction. Its subcellular location is the desmosome. It is found in the cell membrane. It localises to the stress granule. Functionally, a component of desmosome cell-cell junctions which are required for positive regulation of cellular adhesion. Plays a role in desmosome protein expression regulation and localization to the desmosomal plaque, thereby maintaining cell sheet integrity and anchorage of desmosomes to intermediate filaments. Required for localization of DSG3 and YAP1 to the cell membrane in keratinocytes in response to mechanical strain, via the formation of an interaction complex composed of DSG3, YAP1, PKP1 and YWHAG. Positively regulates differentiation of keratinocytes, potentially via promoting localization of DSG1 at desmosome cell junctions. Required for calcium-independent development and maturation of desmosome plaques specifically at lateral cell-cell contacts in differentiating keratinocytes. Plays a role in the maintenance of DSG3 protein abundance, DSG3 clustering and localization of these clusters to the cell membrane in keratinocytes. May also promote keratinocyte proliferation and morphogenesis during postnatal development. Required for tight junction inside-out transepidermal barrier function of the skin, and is thereby involved in neonatal survival possibly via maintenance of hydration levels. Promotes Wnt-mediated proliferation and differentiation of ameloblasts, via facilitating TJP1/ZO-1 localization to tight junctions. Binds single-stranded DNA (ssDNA), and may thereby play a role in sensing DNA damage and promoting cell survival. Positively regulates cap-dependent translation and as a result cell proliferation, via recruitment of EIF4A1 to the initiation complex and promotion of EIF4A1 ATPase activity. Regulates the mRNA stability and protein abundance of desmosome components PKP2, PKP3, DSC2 and DSP, potentially via its interaction with FXR1. This is Plakophilin-1 (Pkp1) from Mus musculus (Mouse).